A 603-amino-acid polypeptide reads, in one-letter code: MGPPPPPPPPPLLPSGEILPSRKWKTEDAPRRNNHPAPAPPKPSRPTVDASALQHAAARLRKTGYNEPVRGDVENLSDGRLDRPHQQLPDGDRTYRANLQQLAQPKTRAEIPSPPTYSNQPRPLGDFHRDPNALSQFQQSREALLSSTSPTSNYSPINKFSSSTLTQYANKSPSPPSFGNSNSEATYVSPYSSKHSYPTNFRSYHKDDDYFNNTATTATTTTSSNSLNENNNSNKYGNKETVLQWSEPYDPSKIRRSQSPIRNAREMIHEYSTTNYVTEVQQPPPPPPDLYQRMTQARTFLQNSLAKQLRDEGLTESQKAANRNQTGALSASSSIPFDASQIVKNSYNGDEVDHLVHQMRTKLNQPADTSPSIVQYPRRQAPDSSRANYSATTSTSFSSSTTRKIMNINICVGCGKEITGDQPGCNAMNQIFHVDCFKCGQCSKTLAGASFYNIDDKPTCEGCYQNSLEKCTACNRAISDKLLRACGGVYHVNCFVCFSCKKSLDGIPFTLDKDNNVHCVPCFHDKFAPRCALCSKPIVPQDGEKESVRVVAMDKSFHVDCYKCEDCGMQLSSKLEGQGCYPIDNHLLCKTCNGNRLRVVSST.

A compositionally biased stretch (pro residues) spans 1–13 (MGPPPPPPPPPLL). Disordered regions lie at residues 1-131 (MGPP…HRDP), 166-193 (TQYANKSPSPPSFGNSNSEATYVSPYSS), 218-237 (ATTTTSSNSLNENNNSNKYG), 310-333 (RDEGLTESQKAANRNQTGALSASS), and 363-395 (LNQPADTSPSIVQYPRRQAPDSSRANYSATTST). Residues 69 to 95 (VRGDVENLSDGRLDRPHQQLPDGDRTY) show a composition bias toward basic and acidic residues. The segment covering 184 to 193 (EATYVSPYSS) has biased composition (polar residues). The segment covering 218 to 234 (ATTTTSSNSLNENNNSN) has biased composition (low complexity). Composition is skewed to polar residues over residues 315–333 (TESQKAANRNQTGALSASS), 363–373 (LNQPADTSPSI), and 382–391 (PDSSRANYSA). LIM zinc-binding domains lie at 409 to 470 (NICV…SLEK), 471 to 529 (CTAC…KFAP), and 530 to 601 (RCAL…RVVS).

Belongs to the zyxin/ajuba family. In terms of assembly, interacts with dyc-1. Interacts with glh-1 and glh-3. As to expression, expressed in neurons and body wall muscle. Expressed in pharyngeal, enteric and uterine muscles and in spermatheca.

It is found in the nucleus. Its subcellular location is the cytoplasm. The protein localises to the myofibril. It localises to the sarcomere. The protein resides in the m line. It is found in the cell projection. Its subcellular location is the axon. The protein localises to the cell junction. It localises to the focal adhesion. The protein resides in the cytoskeleton. Its function is as follows. Functions both as a mechanical stabilizer (via LIM domains) of focal adhesions, and as a sensor component for muscle cell damage (via N-terminus). Regulates, stabilizes and maintains posterior lateral mechanosensory (PLM) synaptic branch extension and new synapse formation and growth during larval development. The polypeptide is Zyxin (Caenorhabditis elegans).